Reading from the N-terminus, the 515-residue chain is Serine/threonine-protein phosphatase PP-Z (515 aa).

Residues 1 to 186 are disordered; the sequence is MGQGSSKHAD…SSTDPDDPET (186 aa). Residues 17–30 are compositionally biased toward polar residues; that stretch reads PSFSRSDTQGSIKS. S18 carries the phosphoserine modification. Residues 40-51 are compositionally biased toward basic and acidic residues; sequence KGKDSNHDRRTS. Pro residues predominate over residues 63 to 74; it reads ETPPSLPPPPSP. A compositionally biased stretch (polar residues) spans 91-109; that stretch reads DSGNSSQSPTSPHPSNQPA. Low complexity predominate over residues 126-143; the sequence is SSSSYAVSPTSPTSPTSS. Residues D248, H250, D276, and N308 each contribute to the Mn(2+) site. The active-site Proton donor is the H309. H357 and H432 together coordinate Mn(2+). S505 and S514 each carry phosphoserine.

Belongs to the PPP phosphatase family. PP-Z subfamily. Mn(2+) is required as a cofactor.

The protein localises to the cytoplasm. The catalysed reaction is O-phospho-L-seryl-[protein] + H2O = L-seryl-[protein] + phosphate. It catalyses the reaction O-phospho-L-threonyl-[protein] + H2O = L-threonyl-[protein] + phosphate. This Schizosaccharomyces pombe (strain 972 / ATCC 24843) (Fission yeast) protein is Serine/threonine-protein phosphatase PP-Z (pzh1).